The primary structure comprises 387 residues: Carbamoyl phosphate synthase small chain (387 aa).

The segment at 1–189 (MIKSAILVLE…GLPEDKQEQD (189 aa)) is CPSase. 3 residues coordinate L-glutamine: S47, G241, and G243. In terms of domain architecture, Glutamine amidotransferase type-1 spans 193-380 (HVVAYDFGAK…IELIEQYCQK (188 aa)). Catalysis depends on C269, which acts as the Nucleophile. L-glutamine-binding residues include L270, Q273, N311, G313, and F314. Catalysis depends on residues H353 and E355.

Belongs to the CarA family. Composed of two chains; the small (or glutamine) chain promotes the hydrolysis of glutamine to ammonia, which is used by the large (or ammonia) chain to synthesize carbamoyl phosphate. Tetramer of heterodimers (alpha,beta)4.

The catalysed reaction is hydrogencarbonate + L-glutamine + 2 ATP + H2O = carbamoyl phosphate + L-glutamate + 2 ADP + phosphate + 2 H(+). The enzyme catalyses L-glutamine + H2O = L-glutamate + NH4(+). It functions in the pathway amino-acid biosynthesis; L-arginine biosynthesis; carbamoyl phosphate from bicarbonate: step 1/1. Its pathway is pyrimidine metabolism; UMP biosynthesis via de novo pathway; (S)-dihydroorotate from bicarbonate: step 1/3. In terms of biological role, small subunit of the glutamine-dependent carbamoyl phosphate synthetase (CPSase). CPSase catalyzes the formation of carbamoyl phosphate from the ammonia moiety of glutamine, carbonate, and phosphate donated by ATP, constituting the first step of 2 biosynthetic pathways, one leading to arginine and/or urea and the other to pyrimidine nucleotides. The small subunit (glutamine amidotransferase) binds and cleaves glutamine to supply the large subunit with the substrate ammonia. This Photorhabdus laumondii subsp. laumondii (strain DSM 15139 / CIP 105565 / TT01) (Photorhabdus luminescens subsp. laumondii) protein is Carbamoyl phosphate synthase small chain.